Consider the following 245-residue polypeptide: Probable phosphatase CKO_02035 (245 aa).

The Zn(2+) site is built by His7, His9, His15, His40, Glu73, His101, His131, Asp192, and His194.

This sequence belongs to the PHP family. In terms of assembly, homotrimer. Requires Zn(2+) as cofactor.

This is Probable phosphatase CKO_02035 from Citrobacter koseri (strain ATCC BAA-895 / CDC 4225-83 / SGSC4696).